The primary structure comprises 299 residues: AT-hook motif nuclear-localized protein 25 (299 aa).

2 disordered regions span residues 1 to 87 and 216 to 251; these read MSSY…RDSP and EEET…CESN. Composition is skewed to basic and acidic residues over residues 14–23 and 33–42; these read HLQRPEDSRT and NRSEADEAKA. 2 stretches are compositionally biased toward low complexity: residues 44–72 and 224–239; these read TTPT…PAGS and TTGV…QSSE. Positions 63–75 form a DNA-binding region, a.T hook; the sequence is RRPRGRPAGSKNK. The region spanning 87 to 233 is the PPC domain; it reads PNVLRSHVLE…TTGVQQQQPE (147 aa). A compositionally biased stretch (polar residues) spans 240–251; sequence VTGSGAQACESN.

Homodimer. Interacts with AHL27 and AHL29. In terms of tissue distribution, expressed in seedlings, leaves, stems, floral tips and flowers.

The protein resides in the nucleus. Its function is as follows. Transcription factor that specifically binds AT-rich DNA sequences related to the nuclear matrix attachment regions (MARs). Binds the DNA sequence GNFEI (GA-negative feedback element I) in the GA3OX1 promoter. Binding to GNFEI sequence is required for GA-negative feedback regulation of GA3OX1. In Arabidopsis thaliana (Mouse-ear cress), this protein is AT-hook motif nuclear-localized protein 25.